The sequence spans 209 residues: dTTP/UTP pyrophosphatase (209 aa).

Asp88 acts as the Proton acceptor in catalysis.

This sequence belongs to the Maf family. YhdE subfamily. It depends on a divalent metal cation as a cofactor.

The protein localises to the cytoplasm. It carries out the reaction dTTP + H2O = dTMP + diphosphate + H(+). The enzyme catalyses UTP + H2O = UMP + diphosphate + H(+). In terms of biological role, nucleoside triphosphate pyrophosphatase that hydrolyzes dTTP and UTP. May have a dual role in cell division arrest and in preventing the incorporation of modified nucleotides into cellular nucleic acids. The sequence is that of dTTP/UTP pyrophosphatase from Burkholderia mallei (strain ATCC 23344).